We begin with the raw amino-acid sequence, 327 residues long: Undecaprenyl-phosphate 4-deoxy-4-formamido-L-arabinose transferase (327 aa).

Helical transmembrane passes span 233–253 (ILSL…LLLI) and 268–288 (VFTL…GMGL).

This sequence belongs to the glycosyltransferase 2 family.

It is found in the cell inner membrane. The enzyme catalyses UDP-4-deoxy-4-formamido-beta-L-arabinose + di-trans,octa-cis-undecaprenyl phosphate = 4-deoxy-4-formamido-alpha-L-arabinopyranosyl di-trans,octa-cis-undecaprenyl phosphate + UDP. It functions in the pathway glycolipid biosynthesis; 4-amino-4-deoxy-alpha-L-arabinose undecaprenyl phosphate biosynthesis; 4-amino-4-deoxy-alpha-L-arabinose undecaprenyl phosphate from UDP-4-deoxy-4-formamido-beta-L-arabinose and undecaprenyl phosphate: step 1/2. Its pathway is bacterial outer membrane biogenesis; lipopolysaccharide biosynthesis. Functionally, catalyzes the transfer of 4-deoxy-4-formamido-L-arabinose from UDP to undecaprenyl phosphate. The modified arabinose is attached to lipid A and is required for resistance to polymyxin and cationic antimicrobial peptides. The polypeptide is Undecaprenyl-phosphate 4-deoxy-4-formamido-L-arabinose transferase (Pectobacterium carotovorum subsp. carotovorum (strain PC1)).